Consider the following 340-residue polypeptide: 3-isopropylmalate dehydrogenase (340 aa).

The substrate site is built by arginine 88, arginine 98, arginine 122, and aspartate 212. Mg(2+) is bound by residues aspartate 212, aspartate 236, and aspartate 240. Residue 272–284 coordinates NAD(+); that stretch reads GSAPDIAGQGIAD.

Belongs to the isocitrate and isopropylmalate dehydrogenases family. LeuB type 2 subfamily. As to quaternary structure, homodimer. It depends on Mg(2+) as a cofactor. Mn(2+) is required as a cofactor.

The protein resides in the cytoplasm. The catalysed reaction is (2R,3S)-3-isopropylmalate + NAD(+) = 4-methyl-2-oxopentanoate + CO2 + NADH. The protein operates within amino-acid biosynthesis; L-leucine biosynthesis; L-leucine from 3-methyl-2-oxobutanoate: step 3/4. Catalyzes the oxidation of 3-carboxy-2-hydroxy-4-methylpentanoate (3-isopropylmalate) to 3-carboxy-4-methyl-2-oxopentanoate. The product decarboxylates to 4-methyl-2 oxopentanoate. The sequence is that of 3-isopropylmalate dehydrogenase (leuB) from Corynebacterium glutamicum (strain ATCC 13032 / DSM 20300 / JCM 1318 / BCRC 11384 / CCUG 27702 / LMG 3730 / NBRC 12168 / NCIMB 10025 / NRRL B-2784 / 534).